The following is a 185-amino-acid chain: uncharacterized protein (185 aa).

Residues 1 to 29 (MKLFSRTSLVALGTAAAITLSGVTAPAFA) form the signal peptide. Residues 41–66 (KTAEDNTPEAPGASTPLKLEQPGTIT) are disordered.

Post-translationally, glycosylated; by Pmt.

The protein resides in the secreted. This is an uncharacterized protein from Corynebacterium glutamicum (strain ATCC 13032 / DSM 20300 / JCM 1318 / BCRC 11384 / CCUG 27702 / LMG 3730 / NBRC 12168 / NCIMB 10025 / NRRL B-2784 / 534).